Consider the following 322-residue polypeptide: DNA primase small subunit PriS (322 aa).

Active-site residues include Asp86, Asp88, and Asp226.

Belongs to the eukaryotic-type primase small subunit family. In terms of assembly, heterodimer of a small subunit (PriS) and a large subunit (PriL). Mg(2+) is required as a cofactor. Requires Mn(2+) as cofactor.

Functionally, catalytic subunit of DNA primase, an RNA polymerase that catalyzes the synthesis of short RNA molecules used as primers for DNA polymerase during DNA replication. The small subunit contains the primase catalytic core and has DNA synthesis activity on its own. Binding to the large subunit stabilizes and modulates the activity, increasing the rate of DNA synthesis while decreasing the length of the DNA fragments, and conferring RNA synthesis capability. The DNA polymerase activity may enable DNA primase to also catalyze primer extension after primer synthesis. May also play a role in DNA repair. This Thermoplasma acidophilum (strain ATCC 25905 / DSM 1728 / JCM 9062 / NBRC 15155 / AMRC-C165) protein is DNA primase small subunit PriS.